A 790-amino-acid polypeptide reads, in one-letter code: SH3 domain-containing protein 19 (790 aa).

2 disordered regions span residues 21–196 (EGQT…PVLQ) and 241–374 (EPIK…MDLQ). At serine 65 the chain carries Phosphoserine. Residues 287–296 (NTFSTVSGKL) are compositionally biased toward polar residues. The span at 336–351 (QQPPTKVPPERPPPPK) shows a compositional bias: pro residues. The tract at residues 342 to 358 (VPPERPPPPKLSATRRS) is interaction with SH3GL1. Residues 365–374 (NRSSSDMDLQ) are compositionally biased toward polar residues. Phosphoserine is present on serine 369. SH3 domains follow at residues 415-477 (LSVP…PLDE), 495-554 (SGAP…VIID), 571-630 (VKGS…PVED), 661-720 (LPAE…PCPA), and 730-789 (PKGR…FLQI). The residue at position 762 (serine 762) is a Phosphoserine.

As to quaternary structure, interacts with ADAM12. Isoform 4 and isoform 5 (but not isoform 1 and isoform 2) interact with ADAM9, ADAM10, ADAM15 and ADAM17. Interacts with SH3GL1 SH3 domain. Interacts via SH3 3 and SH3 4 or SH3 4 and SH3 5 domains with SOS2. Probably forms a trimeric complex with SH3GL1 and SOS2. Interacts with SH3YL1. In terms of tissue distribution, widely expressed with highest levels in heart, skeletal muscle, kidney, liver, placenta, small intestine and lung. Expressed at low levels in colon, thymus, spleen and leukocytes.

The protein resides in the cytoplasm. The protein localises to the nucleus. In terms of biological role, may play a role in regulating A disintegrin and metalloproteases (ADAMs) in the signaling of EGFR-ligand shedding. May be involved in suppression of Ras-induced cellular transformation and Ras-mediated activation of ELK1. Plays a role in the regulation of cell morphology and cytoskeletal organization. The protein is SH3 domain-containing protein 19 (SH3D19) of Homo sapiens (Human).